Here is a 394-residue protein sequence, read N- to C-terminus: MAKEKFERTKPHVNVGTIGHVDHGKTTLTAAITTVLSKTYGGSAQAFDQIDNAPEEKARGITISTSHVEYDTPTRHYAHVDCPGHADYVKNMITGAAQMDGGILVVAATDGPMPQTREHILLGRQVGIPYIIVFMNKCDMVDDEELLELVEMEVRELLNEYEFPGDDLPVIQGSALKALEGDAEWEKKIIELGEALDSYIPEPERAIDKPFILPIEDVFSISGRGTVVTGRVEQGIIKVGEEVEIVGIKDTTKTTCTGVEMFRKLLDEGRAGENVGVLLRGTKRDEVERGQVLAKPGSITPHVNFEAEVYVLSKDEGGRHTPFFKGYRPQFYFRTTDVTGAVELPEGVEMVMPGDNLKFKVELIAPIAMEEGLRFAIREGGRTVGAGVVSKILD.

One can recognise a tr-type G domain in the interval 10–204; it reads KPHVNVGTIG…ALDSYIPEPE (195 aa). The G1 stretch occupies residues 19–26; sequence GHVDHGKT. Residue 19-26 coordinates GTP; that stretch reads GHVDHGKT. Threonine 26 contacts Mg(2+). Residues 60–64 are G2; sequence GITIS. Residues 81-84 are G3; the sequence is DCPG. GTP is bound by residues 81-85 and 136-139; these read DCPGH and NKCD. The segment at 136-139 is G4; the sequence is NKCD. A G5 region spans residues 174 to 176; that stretch reads SAL.

Belongs to the TRAFAC class translation factor GTPase superfamily. Classic translation factor GTPase family. EF-Tu/EF-1A subfamily. Monomer.

The protein resides in the cytoplasm. It carries out the reaction GTP + H2O = GDP + phosphate + H(+). GTP hydrolase that promotes the GTP-dependent binding of aminoacyl-tRNA to the A-site of ribosomes during protein biosynthesis. The protein is Elongation factor Tu of Alteromonas mediterranea (strain DSM 17117 / CIP 110805 / LMG 28347 / Deep ecotype).